The sequence spans 296 residues: Sperm-activating peptides (296 aa).

3 propeptides span residues 1 to 134 (MPPG…MYKK), 146 to 190 (MLSN…MILK), and 290 to 296 (EVEIKDW).

Its function is as follows. Causes stimulation of sperm respiration and motility through intracellular alkalinization, transient elevations of cAMP, cGMP and calcium levels in sperm cells, and transient activation and subsequent inactivation of the membrane form of guanylate cyclase. The protein is Sperm-activating peptides of Strongylocentrotus purpuratus (Purple sea urchin).